We begin with the raw amino-acid sequence, 585 residues long: RNA polymerase sigma factor RpoD (585 aa).

The disordered stretch occupies residues 67–93; it reads PASTLVPKDDSKPARKKKESSASTSGS. The sigma-70 factor domain-2 stretch occupies residues 351-421; sequence LVKANLRLVV…TRAISDQART (71 aa). The Interaction with polymerase core subunit RpoC motif lies at 375–378; the sequence is DLIQ. The interval 430–506 is sigma-70 factor domain-3; that stretch reads EQVNKVIRET…DTEVETPVNA (77 aa). A sigma-70 factor domain-4 region spans residues 519 to 572; it reads VLHTLPAREQKVIRMRFGLDDGYPQTLEEVGYQFKVTRERIRQIEAKALRRLRH. Residues 545-564 constitute a DNA-binding region (H-T-H motif); sequence LEEVGYQFKVTRERIRQIEA.

It belongs to the sigma-70 factor family. RpoD/SigA subfamily. As to quaternary structure, interacts transiently with the RNA polymerase catalytic core.

The protein resides in the cytoplasm. Its function is as follows. Sigma factors are initiation factors that promote the attachment of RNA polymerase to specific initiation sites and are then released. This sigma factor is the primary sigma factor during exponential growth. This is RNA polymerase sigma factor RpoD from Leptospira interrogans serogroup Icterohaemorrhagiae serovar copenhageni (strain Fiocruz L1-130).